The chain runs to 445 residues: Methionine aminopeptidase 2-2 (445 aa).

Residues Met1–Asn92 are disordered. Over residues Ala18–Ala33 the composition is skewed to low complexity. Over residues Gly34–Asp46 the composition is skewed to acidic residues. The segment covering Gly47 to Ala58 has biased composition (low complexity). Residues Ala59–Gly74 show a composition bias toward basic residues. His198 contributes to the substrate binding site. Asp218, Asp229, and His298 together coordinate a divalent metal cation. His306 serves as a coordination point for substrate. A divalent metal cation is bound by residues Glu331 and Glu426.

Belongs to the peptidase M24A family. Methionine aminopeptidase eukaryotic type 2 subfamily. Requires Co(2+) as cofactor. Zn(2+) serves as cofactor. The cofactor is Mn(2+). It depends on Fe(2+) as a cofactor.

It localises to the cytoplasm. The enzyme catalyses Release of N-terminal amino acids, preferentially methionine, from peptides and arylamides.. In terms of biological role, cotranslationally removes the N-terminal methionine from nascent proteins. The N-terminal methionine is often cleaved when the second residue in the primary sequence is small and uncharged (Met-Ala-, Cys, Gly, Pro, Ser, Thr, or Val). This Aspergillus terreus (strain NIH 2624 / FGSC A1156) protein is Methionine aminopeptidase 2-2.